A 51-amino-acid chain; its full sequence is Bacteriocin aureocin A53 (51 aa).

Methionine 1 carries the post-translational modification N-formylmethionine.

It is found in the secreted. In terms of biological role, antibacterial peptide active against a broad range of lactic acid bacteria, L.monocytogenes and many epidemiologically unrelated strains of S.aureus involved in bovine mastitis. This is Bacteriocin aureocin A53 (aucA) from Staphylococcus aureus.